The chain runs to 308 residues: Glutaminase 1 (308 aa).

7 residues coordinate substrate: S64, N116, E161, N168, Y192, Y244, and V262.

This sequence belongs to the glutaminase family. Homotetramer.

The enzyme catalyses L-glutamine + H2O = L-glutamate + NH4(+). In Halalkalibacterium halodurans (strain ATCC BAA-125 / DSM 18197 / FERM 7344 / JCM 9153 / C-125) (Bacillus halodurans), this protein is Glutaminase 1.